The following is a 699-amino-acid chain: tRNA 5-methylaminomethyl-2-thiouridine biosynthesis bifunctional protein MnmC (699 aa).

The segment at 1-260 is tRNA (mnm(5)s(2)U34)-methyltransferase; it reads MTAKPHISCQ…ERKLLRQQAN (260 aa). The interval 282-699 is FAD-dependent cmnm(5)s(2)U34 oxidoreductase; that stretch reads IGGGLASAHL…LRKLLKGKAL (418 aa).

It in the N-terminal section; belongs to the methyltransferase superfamily. tRNA (mnm(5)s(2)U34)-methyltransferase family. In the C-terminal section; belongs to the DAO family. Requires FAD as cofactor.

The protein resides in the cytoplasm. The enzyme catalyses 5-aminomethyl-2-thiouridine(34) in tRNA + S-adenosyl-L-methionine = 5-methylaminomethyl-2-thiouridine(34) in tRNA + S-adenosyl-L-homocysteine + H(+). Functionally, catalyzes the last two steps in the biosynthesis of 5-methylaminomethyl-2-thiouridine (mnm(5)s(2)U) at the wobble position (U34) in tRNA. Catalyzes the FAD-dependent demodification of cmnm(5)s(2)U34 to nm(5)s(2)U34, followed by the transfer of a methyl group from S-adenosyl-L-methionine to nm(5)s(2)U34, to form mnm(5)s(2)U34. This is tRNA 5-methylaminomethyl-2-thiouridine biosynthesis bifunctional protein MnmC from Shewanella oneidensis (strain ATCC 700550 / JCM 31522 / CIP 106686 / LMG 19005 / NCIMB 14063 / MR-1).